We begin with the raw amino-acid sequence, 526 residues long: Glutamyl-tRNA(Gln) amidotransferase subunit A, mitochondrial (526 aa).

Catalysis depends on K76, which acts as the Charge relay system. The interval 147-166 (QYREKRKQNSHSENEDSNWL) is disordered. Residue S171 is the Charge relay system of the active site. The Acyl-ester intermediate role is filled by S195.

This sequence belongs to the amidase family. GatA subfamily. Subunit of the heterotrimeric GatCAB amidotransferase (AdT) complex, composed of A (QRSL1), B (GATB) and C (GATC) subunits.

The protein resides in the mitochondrion. The catalysed reaction is L-glutamyl-tRNA(Gln) + L-glutamine + ATP + H2O = L-glutaminyl-tRNA(Gln) + L-glutamate + ADP + phosphate + H(+). Functionally, allows the formation of correctly charged Gln-tRNA(Gln) through the transamidation of misacylated Glu-tRNA(Gln) in the mitochondria. The reaction takes place in the presence of glutamine and ATP through an activated gamma-phospho-Glu-tRNA(Gln). The chain is Glutamyl-tRNA(Gln) amidotransferase subunit A, mitochondrial from Bos taurus (Bovine).